Here is a 287-residue protein sequence, read N- to C-terminus: ATP synthase gamma chain (287 aa).

Belongs to the ATPase gamma chain family. In terms of assembly, F-type ATPases have 2 components, CF(1) - the catalytic core - and CF(0) - the membrane proton channel. CF(1) has five subunits: alpha(3), beta(3), gamma(1), delta(1), epsilon(1). CF(0) has three main subunits: a, b and c.

It is found in the cell membrane. In terms of biological role, produces ATP from ADP in the presence of a proton gradient across the membrane. The gamma chain is believed to be important in regulating ATPase activity and the flow of protons through the CF(0) complex. The sequence is that of ATP synthase gamma chain from Staphylococcus carnosus (strain TM300).